Consider the following 162-residue polypeptide: Xanthine phosphoribosyltransferase (162 aa).

Residues L5 and T12 each coordinate xanthine. 113–117 is a 5-phospho-alpha-D-ribose 1-diphosphate binding site; sequence ANGQA. K141 lines the xanthine pocket.

It belongs to the purine/pyrimidine phosphoribosyltransferase family. Xpt subfamily. As to quaternary structure, homodimer.

It localises to the cytoplasm. The catalysed reaction is XMP + diphosphate = xanthine + 5-phospho-alpha-D-ribose 1-diphosphate. Its pathway is purine metabolism; XMP biosynthesis via salvage pathway; XMP from xanthine: step 1/1. Functionally, converts the preformed base xanthine, a product of nucleic acid breakdown, to xanthosine 5'-monophosphate (XMP), so it can be reused for RNA or DNA synthesis. The sequence is that of Xanthine phosphoribosyltransferase (xpt) from Streptococcus mitis.